A 143-amino-acid chain; its full sequence is ATP synthase F(0) complex subunit C2, mitochondrial (143 aa).

Residues 1–68 constitute a mitochondrion transit peptide; the sequence is MYTCAKFVST…RSFQTSAISR (68 aa). A helical transmembrane segment spans residues 84-104; that stretch reads VGVAGSGAGIGTVFGSLIIGY. K111 carries the post-translational modification N6,N6,N6-trimethyllysine. A helical transmembrane segment spans residues 119–139; the sequence is ILGFALSEAMGLFCLMVAFLI.

Belongs to the ATPase C chain family. As to quaternary structure, F-type ATPases have 2 components, CF(1) - the catalytic core - and CF(0) - the membrane proton channel. CF(1) has five subunits: alpha(3), beta(3), gamma(1), delta(1), epsilon(1). CF(0) has three main subunits: a, b and c. Interacts with DNAJC30; interaction is direct. Trimethylated by ATPSCKMT at Lys-111. Methylation is required for proper incorporation of the C subunit into the ATP synthase complex and mitochondrial respiration.

Its subcellular location is the mitochondrion membrane. Its function is as follows. Mitochondrial membrane ATP synthase (F(1)F(0) ATP synthase or Complex V) produces ATP from ADP in the presence of a proton gradient across the membrane which is generated by electron transport complexes of the respiratory chain. F-type ATPases consist of two structural domains, F(1) - containing the extramembraneous catalytic core and F(0) - containing the membrane proton channel, linked together by a central stalk and a peripheral stalk. During catalysis, ATP synthesis in the catalytic domain of F(1) is coupled via a rotary mechanism of the central stalk subunits to proton translocation. Part of the complex F(0) domain. A homomeric c-ring of probably 10 subunits is part of the complex rotary element. The polypeptide is ATP synthase F(0) complex subunit C2, mitochondrial (Bos taurus (Bovine)).